We begin with the raw amino-acid sequence, 810 residues long: MIQQKVLFISLVAVTLGLGLGLGLKESVQPQAQSWSCSKLRCGEKRIANVLCSCSDDCLEKKDCCTDYKSICKGETSWLKDKCASSGATQCPAGFEQSPLILFSMDGFRAGYLENWDSLMPNINKLKTCGTHAKYMRAVYPTKTFVNHYTIATGLYPESHGIIDNNIYDVNLNLNFSLSSSTARNPAWWGGQPIWHTATYQGLKAATYFWPGSEVKINGSYPTIFKNYNKSIPFEARVTEVLKWLDLPKAKRPDFLTLYIEEPDTTGHKYGPVSGEIIKALQMADRTLGMLMEGLKQRNLHNCVNLILLADHGMEEISCDRLEYMANYFNNVDFFMYEGPAPRIRSKNVPKDFYTFDSEGIVKNLTCRKPKQYFKAYLSKDLPKRLHYANNIRIDKVNLMVDQQWMAVRDKKFTRCKGGTHGYDNEFKSMQAIFLAHGPGFNEKNEVTSFENIEVYNLMCDLLKLKPAPNNGTHGSLNHLLKNPFYTPSPAKEQSSPLSCPFGPVPSPDVSGCKCSSITELEKVNQRLNLNNQAKTESEAHNLPYGRPQVLQNHSKYCLLHQAKYISAYSQDILMPLWSSYTIYRSTSTSVPPSASDCLRLDVRIPAAQSQTCSNYQPDLTITPGFLYPPNFNSSNFEQYDALITSNIVPMFKGFTRLWNYFHTTLIPKYARERNGLNVISGPIFDYNYDGHFDSYDTIKQHVNNTKIPIPTHYFVVLTSCENQINTPLNCLGPLKVLSFILPHRPDNSESCADTSPENLWVEERIQIHTARVRDVELLTGLNFYSGLKQPLPETLQLKTFLPIFVNPVN.

Positions 1 to 23 (MIQQKVLFISLVAVTLGLGLGLG) are cleaved as a signal peptide. Residues 33–77 (QSWSCSKLRCGEKRIANVLCSCSDDCLEKKDCCTDYKSICKGETS) form the SMB domain. 9 disulfides stabilise this stretch: C37-C42, C37-C54, C42-C72, C52-C54, C52-C65, C58-C64, C65-C72, C83-C129, and C91-C303. A divalent metal cation contacts are provided by D106 and T144. The active-site AMP-threonine intermediate is the T144. 3 N-linked (GlcNAc...) asparagine glycosylation sites follow: N175, N218, and N229. AMP is bound at residue K230. Residues D264, H268, D311, and H312 each coordinate a divalent metal cation. Residue H268 coordinates AMP. 6 disulfides stabilise this stretch: C319–C416, C367–C752, C500–C558, C513–C613, C515–C598, and C721–C731. N364 carries an N-linked (GlcNAc...) asparagine glycan. Position 421 (H421) interacts with a divalent metal cation. N-linked (GlcNAc...) asparagine glycans are attached at residues N471, N553, N633, and N704.

The protein belongs to the nucleotide pyrophosphatase/phosphodiesterase family. Monomer cleaved in two subunits; disulfide-linked. Is synthesized as a single-chain protein and is subsequently cleaved to form a two-subunit protein held together with disulfide bonds. The cofactor is a divalent metal cation. In terms of tissue distribution, expressed by venom gland.

The protein localises to the secreted. It carries out the reaction ADP + H2O = AMP + phosphate + H(+). Its function is as follows. Hydrolyzes ADP with high activity. Shows weak or no activity on 5'-AMP, 5'-GMP, 3'-AMP, ATP, cAMP, and cGMP. Is devoid of monophosphatase and proteinase activities. Dose-dependently inhibits platelet aggregation induced by ADP (IC(50)=0.99 uM) and collagen (IC(50)=1.4 uM). This is Venom phosphodiesterase 2 from Crotalus adamanteus (Eastern diamondback rattlesnake).